The primary structure comprises 468 residues: Aspartate ammonia-lyase (468 aa).

Residues Thr-99, Ser-138, Thr-139, Asn-140, and Thr-185 each contribute to the L-aspartate site. The interval 315-324 (GSSIMPGKVN) is SS loop. Ser-316 serves as the catalytic Proton acceptor. Residues Ser-317 and Lys-322 each coordinate L-aspartate.

The protein belongs to the class-II fumarase/aspartase family. Aspartase subfamily. In terms of assembly, homotetramer.

The enzyme catalyses L-aspartate = fumarate + NH4(+). Its function is as follows. Catalyzes the reversible conversion of L-aspartate to fumarate and ammonia. This is Aspartate ammonia-lyase (aspA) from Helicobacter pylori (strain J99 / ATCC 700824) (Campylobacter pylori J99).